The following is a 260-amino-acid chain: tRNA pseudouridine synthase A (260 aa).

The active-site Nucleophile is the Asp-52. Tyr-110 serves as a coordination point for substrate.

This sequence belongs to the tRNA pseudouridine synthase TruA family. As to quaternary structure, homodimer.

It carries out the reaction uridine(38/39/40) in tRNA = pseudouridine(38/39/40) in tRNA. In terms of biological role, formation of pseudouridine at positions 38, 39 and 40 in the anticodon stem and loop of transfer RNAs. This Thiobacillus denitrificans (strain ATCC 25259 / T1) protein is tRNA pseudouridine synthase A.